A 135-amino-acid chain; its full sequence is ATP synthase epsilon chain (135 aa).

Belongs to the ATPase epsilon chain family. In terms of assembly, F-type ATPases have 2 components, CF(1) - the catalytic core - and CF(0) - the membrane proton channel. CF(1) has five subunits: alpha(3), beta(3), gamma(1), delta(1), epsilon(1). CF(0) has three main subunits: a, b and c.

The protein resides in the cell inner membrane. Produces ATP from ADP in the presence of a proton gradient across the membrane. In Mesorhizobium japonicum (strain LMG 29417 / CECT 9101 / MAFF 303099) (Mesorhizobium loti (strain MAFF 303099)), this protein is ATP synthase epsilon chain.